Consider the following 163-residue polypeptide: Olfactory marker protein (163 aa).

The residue at position 2 (Ala-2) is an N-acetylalanine.

Belongs to the olfactory marker protein family. Interacts with BEX1 and BEX2. As to expression, uniquely associated with mature olfactory receptor neurons.

The protein resides in the cytoplasm. Its function is as follows. May act as a modulator of the olfactory signal-transduction cascade. The chain is Olfactory marker protein (Omp) from Mus musculus (Mouse).